We begin with the raw amino-acid sequence, 249 residues long: 2-dehydro-3-deoxy-L-rhamnonate dehydrogenase (NAD(+)) (249 aa).

Tyrosine 156 (proton acceptor) is an active-site residue.

It belongs to the short-chain dehydrogenases/reductases (SDR) family. As to quaternary structure, homotetramer.

The catalysed reaction is 2-dehydro-3-deoxy-L-rhamnonate + NAD(+) = 2,4-didehydro-3-deoxy-L-rhamnonate + NADH + H(+). It functions in the pathway carbohydrate degradation; L-rhamnose degradation. In terms of biological role, catalyzes the NAD(+)-dependent dehydrogenation of 2-dehydro-3-deoxy-L-rhamnonate to form 2,4-didehydro-3-deoxy-L-rhamnonate. Does not show any detectable activity in the presence of NADP(+). Catalyzes the fourth step in an alternative pathway for rhamnose utilization that does not involve phosphorylated intermediates. In Sphingomonas sp. (strain SKA58), this protein is 2-dehydro-3-deoxy-L-rhamnonate dehydrogenase (NAD(+)).